Here is a 226-residue protein sequence, read N- to C-terminus: uncharacterized protein (226 aa).

2 disordered regions span residues 1–20 and 205–226; these read MGAERVGRAPGVNAKRAVQT and LDRKNTAIAQDKSERKKVQRDA.

This is an uncharacterized protein from Treponema pallidum (strain Nichols).